The chain runs to 1682 residues: PHD and RING finger domain-containing protein 1 (1682 aa).

The tract at residues methionine 1 to valine 81 is disordered. Acidic residues predominate over residues aspartate 41–valine 81. The segment at cysteine 109 to arginine 150 adopts an RING-type; degenerate zinc-finger fold. The PHD-type zinc finger occupies proline 185–proline 235. Disordered stretches follow at residues proline 330–serine 412, proline 444–methionine 483, serine 532–asparagine 582, valine 605–phenylalanine 774, and leucine 825–proline 856. The residue at position 332 (threonine 332) is a Phosphothreonine. Composition is skewed to basic residues over residues proline 336 to valine 361 and arginine 369 to lysine 384. A phosphoserine mark is found at serine 447 and serine 457. Polar residues-rich tracts occupy residues proline 609–threonine 620, threonine 630–proline 667, and serine 734–serine 748. Over residues proline 832–proline 856 the composition is skewed to low complexity. Phosphoserine is present on residues serine 845, serine 846, serine 864, serine 867, serine 919, serine 982, and serine 1000. Disordered regions lie at residues serine 911 to valine 1225 and aspartate 1288 to serine 1322. Positions serine 919–proline 931 are enriched in acidic residues. Residues serine 999–serine 1008 are compositionally biased toward low complexity. Composition is skewed to basic residues over residues arginine 1009–serine 1030 and arginine 1053–arginine 1063. Residues serine 1064–arginine 1090 are compositionally biased toward basic and acidic residues. 2 stretches are compositionally biased toward basic residues: residues glycine 1091 to serine 1104 and serine 1119 to serine 1129. Serine 1135 carries the phosphoserine modification. Composition is skewed to basic and acidic residues over residues arginine 1147–serine 1161 and proline 1182–valine 1197. A Phosphoserine modification is found at serine 1201. A compositionally biased stretch (low complexity) spans aspartate 1288–serine 1301. Residues proline 1308–serine 1317 are compositionally biased toward pro residues. A phosphoserine mark is found at serine 1368 and serine 1379. Position 1412 is a phosphothreonine (threonine 1412). 4 disordered regions span residues glutamate 1419–tryptophan 1445, leucine 1463–glycine 1496, alanine 1567–threonine 1588, and methionine 1663–threonine 1682. Residues serine 1574–threonine 1588 are compositionally biased toward basic and acidic residues. Positions alanine 1585 to lysine 1612 form a coiled coil.

As to quaternary structure, interacts with POLR2A (via the C-terminal domain).

This is PHD and RING finger domain-containing protein 1 from Mus musculus (Mouse).